We begin with the raw amino-acid sequence, 277 residues long: MSPLLTARAASKSYRTVSLVGRSPAKTVLSEATVTLSEGETVALLGRSGSGKSTLARLLLGLEKPDHGTIAFRGRPLGGFSRAEWRAFRGAVQMVFQDSLGAVNPRHRVGRIIGEPLRHLTTLDDAGRAARRDALLRQVGLTPEDADKLPQQMSGGQLQRVCIARALAPGPRLLVLDEAVSNLDLMLQIQMIDLLKDLQRQTGMAYLFVTHDLRLVERFCQRVIVLDEGKIVEEAPVTGAQRFEHPASRALQRAILPARPAAASVGDDEGGRRSATR.

Positions 14 to 253 constitute an ABC transporter domain; that stretch reads YRTVSLVGRS…EHPASRALQR (240 aa). 46 to 53 serves as a coordination point for ATP; it reads GRSGSGKS.

Belongs to the ABC transporter superfamily. Nickel importer (TC 3.A.1.5.3) family. In terms of assembly, the complex is composed of two ATP-binding proteins (NikD and NikE), two transmembrane proteins (NikB and NikC) and a solute-binding protein (NikA).

It is found in the cell inner membrane. The enzyme catalyses Ni(2+)(out) + ATP + H2O = Ni(2+)(in) + ADP + phosphate + H(+). Its function is as follows. Part of the ABC transporter complex NikABCDE involved in nickel import. Responsible for energy coupling to the transport system. This Rhodospirillum rubrum (strain ATCC 11170 / ATH 1.1.1 / DSM 467 / LMG 4362 / NCIMB 8255 / S1) protein is Nickel import ATP-binding protein NikE.